The chain runs to 302 residues: Acetaldehyde dehydrogenase 2 (302 aa).

Cys130 acts as the Acyl-thioester intermediate in catalysis. Residues 161 to 169 and Asn272 each bind NAD(+); that span reads SVGPGTRRN.

The protein belongs to the acetaldehyde dehydrogenase family.

It carries out the reaction acetaldehyde + NAD(+) + CoA = acetyl-CoA + NADH + H(+). In Cupriavidus necator (strain ATCC 17699 / DSM 428 / KCTC 22496 / NCIMB 10442 / H16 / Stanier 337) (Ralstonia eutropha), this protein is Acetaldehyde dehydrogenase 2.